A 138-amino-acid polypeptide reads, in one-letter code: Prefoldin subunit alpha (138 aa).

Belongs to the prefoldin subunit alpha family. Heterohexamer of two alpha and four beta subunits.

It is found in the cytoplasm. Functionally, molecular chaperone capable of stabilizing a range of proteins. Seems to fulfill an ATP-independent, HSP70-like function in archaeal de novo protein folding. The sequence is that of Prefoldin subunit alpha from Methanococcoides burtonii (strain DSM 6242 / NBRC 107633 / OCM 468 / ACE-M).